Reading from the N-terminus, the 870-residue chain is DNA polymerase kappa (870 aa).

A UmuC domain is found at 103-358 (IVHIDMDAFY…LPIRKVSGIG (256 aa)). Mg(2+) is bound by residues aspartate 107, aspartate 198, and glutamate 199. 2 UBZ4-type zinc fingers span residues 621–651 (ILTC…DGPS) and 776–806 (ALVC…NKSF). The Zn(2+) site is built by cysteine 624, cysteine 627, histidine 642, cysteine 646, cysteine 779, cysteine 782, histidine 797, and cysteine 801. The tract at residues 816 to 858 (NPVNQPKESSRSTGSSSGVQKAVTRTKRPGLMTKYSTSKKIKP) is disordered.

The protein belongs to the DNA polymerase type-Y family. As to quaternary structure, interacts with REV1. Interacts with PCNA. The cofactor is Mg(2+). It depends on Mn(2+) as a cofactor. In terms of tissue distribution, detected at low levels in testis, spleen, prostate and ovary. Detected at very low levels in kidney, colon, brain, heart, liver, lung, placenta, pancreas and peripheral blood leukocytes.

Its subcellular location is the nucleus. The enzyme catalyses DNA(n) + a 2'-deoxyribonucleoside 5'-triphosphate = DNA(n+1) + diphosphate. Functionally, DNA polymerase specifically involved in DNA repair. Plays an important role in translesion synthesis, where the normal high-fidelity DNA polymerases cannot proceed and DNA synthesis stalls. Depending on the context, it inserts the correct base, but causes frequent base transitions, transversions and frameshifts. Lacks 3'-5' proofreading exonuclease activity. Forms a Schiff base with 5'-deoxyribose phosphate at abasic sites, but does not have lyase activity. The polypeptide is DNA polymerase kappa (POLK) (Homo sapiens (Human)).